A 210-amino-acid chain; its full sequence is Somatotropin (210 aa).

Residues Met1–Ala22 form the signal peptide. His38 serves as a coordination point for Zn(2+). A disulfide bond links Cys71 and Cys183. Residue Glu192 participates in Zn(2+) binding. Cys200 and Cys208 are joined by a disulfide.

The protein belongs to the somatotropin/prolactin family.

It is found in the secreted. Growth hormone plays an important role in growth control and is involved in the regulation of several anabolic processes. Implicated as an osmoregulatory substance important for seawater adaptation. The protein is Somatotropin (gh) of Salmo salar (Atlantic salmon).